Reading from the N-terminus, the 377-residue chain is Nitric oxide reductase FlRd-NAD(+) reductase (377 aa).

It belongs to the FAD-dependent oxidoreductase family. Requires FAD as cofactor.

The protein localises to the cytoplasm. The enzyme catalyses 2 reduced [nitric oxide reductase rubredoxin domain] + NAD(+) + H(+) = 2 oxidized [nitric oxide reductase rubredoxin domain] + NADH. Its pathway is nitrogen metabolism; nitric oxide reduction. In terms of biological role, one of at least two accessory proteins for anaerobic nitric oxide (NO) reductase. Reduces the rubredoxin moiety of NO reductase. In Salmonella gallinarum (strain 287/91 / NCTC 13346), this protein is Nitric oxide reductase FlRd-NAD(+) reductase.